The primary structure comprises 347 residues: Large ribosomal subunit protein uL3 (347 aa).

Positions 325–347 (RPPKKKPPVERPQITYISRESKQ) are disordered.

The protein belongs to the universal ribosomal protein uL3 family. Part of the 50S ribosomal subunit. Forms a cluster with proteins L14 and L24e.

Its function is as follows. One of the primary rRNA binding proteins, it binds directly near the 3'-end of the 23S rRNA, where it nucleates assembly of the 50S subunit. The polypeptide is Large ribosomal subunit protein uL3 (Thermococcus onnurineus (strain NA1)).